A 442-amino-acid chain; its full sequence is UDP-glycosyltransferase 79B8 (442 aa).

UDP-alpha-D-glucose contacts are provided by residues serine 260, 319 to 321 (VQQ), 336 to 344 (HCGPGTIWE), and 358 to 361 (LGDQ).

This sequence belongs to the UDP-glycosyltransferase family.

This chain is UDP-glycosyltransferase 79B8 (UGT79B8), found in Arabidopsis thaliana (Mouse-ear cress).